Consider the following 345-residue polypeptide: N-acetyl-gamma-glutamyl-phosphate reductase (345 aa).

The active site involves C149.

The protein belongs to the NAGSA dehydrogenase family. Type 1 subfamily.

It localises to the cytoplasm. The enzyme catalyses N-acetyl-L-glutamate 5-semialdehyde + phosphate + NADP(+) = N-acetyl-L-glutamyl 5-phosphate + NADPH + H(+). The protein operates within amino-acid biosynthesis; L-arginine biosynthesis; N(2)-acetyl-L-ornithine from L-glutamate: step 3/4. In terms of biological role, catalyzes the NADPH-dependent reduction of N-acetyl-5-glutamyl phosphate to yield N-acetyl-L-glutamate 5-semialdehyde. This chain is N-acetyl-gamma-glutamyl-phosphate reductase, found in Halalkalibacterium halodurans (strain ATCC BAA-125 / DSM 18197 / FERM 7344 / JCM 9153 / C-125) (Bacillus halodurans).